Consider the following 512-residue polypeptide: Sodium/proline symporter (512 aa).

13 helical membrane passes run 16–36 (WQTY…GFYG), 54–74 (IGPY…WMIM), 85–105 (LSAM…YFVV), 139–159 (IISG…GFVS), 174–194 (FGLI…GYLA), 200–220 (FFQG…AMMN), 247–267 (IGII…HIII), 286–306 (ISWM…GIAF), 327–347 (VLFH…AIMS), 381–401 (FVMI…AIAW), 410–430 (LVGN…LFAL), 438–458 (AGAV…IAWI), and 467–487 (IFGL…TYVV).

The protein belongs to the sodium:solute symporter (SSF) (TC 2.A.21) family.

The protein resides in the cell membrane. It catalyses the reaction L-proline(in) + Na(+)(in) = L-proline(out) + Na(+)(out). In terms of biological role, catalyzes the sodium-dependent uptake of extracellular L-proline. Since most S.aureus strains are L-proline auxotrophs, this transporter may aid the bacterial persistence during an infection of tissues with low proline concentrations. The protein is Sodium/proline symporter (putP) of Staphylococcus aureus (strain USA300).